The following is an 885-amino-acid chain: Disease resistance protein RFL1 (885 aa).

The stretch at 27 to 61 (SYIQNLSENLASLQKAMGVLNAKRDDVQGRINREE) forms a coiled coil. Residues 141–443 (EAAPIAEVEE…CEGFIKEKQG (303 aa)) form the NB-ARC domain. 183–190 (GMGGVGKT) lines the ATP pocket. 7 LRR repeats span residues 517–538 (AVKRMSLMNNNFEKILGSPECV), 539–561 (ELITLFLQNNYKLVDISMEFFRC), 564–586 (SLAVLDLSENHSLSELPEEISEL), 588–610 (SLQYLDLSGTYIERLPHGLHELR), 611–633 (KLVHLKLERTRRLESISGISYLS), 634–655 (SLRTLRLRDSKTTLDTGLMKEL), and 657–679 (LLEHLELITTDISSGLVGELFCY).

Belongs to the disease resistance NB-LRR family.

Its function is as follows. Disease resistance (R) protein. The sequence is that of Disease resistance protein RFL1 (RFL1) from Arabidopsis thaliana (Mouse-ear cress).